The sequence spans 315 residues: 4-hydroxy-3-methylbut-2-enyl diphosphate reductase (315 aa).

Cys-12 serves as a coordination point for [4Fe-4S] cluster. (2E)-4-hydroxy-3-methylbut-2-enyl diphosphate is bound by residues His-43 and His-81. The dimethylallyl diphosphate site is built by His-43 and His-81. Isopentenyl diphosphate contacts are provided by His-43 and His-81. Cys-103 provides a ligand contact to [4Fe-4S] cluster. A (2E)-4-hydroxy-3-methylbut-2-enyl diphosphate-binding site is contributed by His-131. His-131 contributes to the dimethylallyl diphosphate binding site. His-131 lines the isopentenyl diphosphate pocket. Glu-133 (proton donor) is an active-site residue. Position 172 (Thr-172) interacts with (2E)-4-hydroxy-3-methylbut-2-enyl diphosphate. Cys-200 contacts [4Fe-4S] cluster. Residues Ser-228, Asn-230, and Ser-273 each contribute to the (2E)-4-hydroxy-3-methylbut-2-enyl diphosphate site. Dimethylallyl diphosphate-binding residues include Ser-228, Asn-230, and Ser-273. Ser-228, Asn-230, and Ser-273 together coordinate isopentenyl diphosphate.

The protein belongs to the IspH family. It depends on [4Fe-4S] cluster as a cofactor.

The catalysed reaction is isopentenyl diphosphate + 2 oxidized [2Fe-2S]-[ferredoxin] + H2O = (2E)-4-hydroxy-3-methylbut-2-enyl diphosphate + 2 reduced [2Fe-2S]-[ferredoxin] + 2 H(+). The enzyme catalyses dimethylallyl diphosphate + 2 oxidized [2Fe-2S]-[ferredoxin] + H2O = (2E)-4-hydroxy-3-methylbut-2-enyl diphosphate + 2 reduced [2Fe-2S]-[ferredoxin] + 2 H(+). The protein operates within isoprenoid biosynthesis; dimethylallyl diphosphate biosynthesis; dimethylallyl diphosphate from (2E)-4-hydroxy-3-methylbutenyl diphosphate: step 1/1. It functions in the pathway isoprenoid biosynthesis; isopentenyl diphosphate biosynthesis via DXP pathway; isopentenyl diphosphate from 1-deoxy-D-xylulose 5-phosphate: step 6/6. Functionally, catalyzes the conversion of 1-hydroxy-2-methyl-2-(E)-butenyl 4-diphosphate (HMBPP) into a mixture of isopentenyl diphosphate (IPP) and dimethylallyl diphosphate (DMAPP). Acts in the terminal step of the DOXP/MEP pathway for isoprenoid precursor biosynthesis. The chain is 4-hydroxy-3-methylbut-2-enyl diphosphate reductase from Exiguobacterium sibiricum (strain DSM 17290 / CCUG 55495 / CIP 109462 / JCM 13490 / 255-15).